Reading from the N-terminus, the 501-residue chain is Carboxypeptidase 1 (501 aa).

The region spanning 3–496 (IHTYEKEFFD…LIDYLSNKYS (494 aa)) is the Peptidase M32 domain. Residues 234-236 (HPF) carry the HPF motif. Positions 244-248 (DVRVT) match the DXRXT motif. His-265 serves as a coordination point for Zn(2+). Positions 265 to 269 (HECGH) match the HEXXH motif. Glu-266 functions as the Proton donor/acceptor in the catalytic mechanism. Zn(2+) contacts are provided by His-269 and Glu-295. An HES/GQ motif is present at residues 294 to 297 (HESQ). Residues 347–352 (IRVEAD) carry the I/NRXXA/SD motif. The GXXQDXHW motif lies at 402-409 (GILQDVHW).

It belongs to the peptidase M32 family. In terms of assembly, homodimer. Zn(2+) serves as cofactor.

The catalysed reaction is Release of a C-terminal amino acid with broad specificity, except for -Pro.. Functionally, broad specificity carboxypetidase that releases amino acids sequentially from the C-terminus, including neutral, aromatic, polar and basic residues. Has lower activity with substrates ending with His or Trp. The protein is Carboxypeptidase 1 (ypwA) of Bacillus subtilis (strain 168).